The primary structure comprises 134 residues: Holo-[acyl-carrier-protein] synthase (134 aa).

D8 and E57 together coordinate Mg(2+).

The protein belongs to the P-Pant transferase superfamily. AcpS family. It depends on Mg(2+) as a cofactor.

It localises to the cytoplasm. It catalyses the reaction apo-[ACP] + CoA = holo-[ACP] + adenosine 3',5'-bisphosphate + H(+). Functionally, transfers the 4'-phosphopantetheine moiety from coenzyme A to a Ser of acyl-carrier-protein. The protein is Holo-[acyl-carrier-protein] synthase of Rhizobium etli (strain ATCC 51251 / DSM 11541 / JCM 21823 / NBRC 15573 / CFN 42).